Reading from the N-terminus, the 312-residue chain is Nucleosome assembly protein 1-like 4 (312 aa).

Residues 24-78 (VETLKNKLQALAEQHVDVLESLAPSVRKRVDVLMEIQSQHDELEVKFFEEKAALE) adopt a coiled-coil conformation. The Nuclear export signal signature appears at 45 to 60 (LAPSVRKRVDVLMEIQ). The segment at 288-312 (EDYGASWVDDEEEDDNDDEYSDEEA) is disordered.

It belongs to the nucleosome assembly protein (NAP) family.

It localises to the nucleus. The protein localises to the cytoplasm. In terms of biological role, may modulate chromatin structure by regulation of nucleosome assembly/disassembly. In Oryza sativa subsp. indica (Rice), this protein is Nucleosome assembly protein 1-like 4.